We begin with the raw amino-acid sequence, 199 residues long: UPF0316 protein LA_0606 (199 aa).

2 helical membrane passes run 47–67 (IAAS…TQVI) and 73–93 (VFCY…GMIL).

It belongs to the UPF0316 family.

It localises to the cell membrane. The polypeptide is UPF0316 protein LA_0606 (Leptospira interrogans serogroup Icterohaemorrhagiae serovar Lai (strain 56601)).